We begin with the raw amino-acid sequence, 363 residues long: Autophagy-related protein 3 (363 aa).

2 stretches are compositionally biased toward basic and acidic residues: residues 84 to 106 (DFAG…RGDG) and 129 to 138 (ARVRDVRTVD). Positions 84-171 (DFAGDAGHDE…DDEAIIRDPK (88 aa)) are flexible region. Residues 84–174 (DFAGDAGHDE…AIIRDPKADN (91 aa)) form a disordered region. Residues 139–164 (ESGEMGEREDDEDDIPDMEDDDDDDE) are compositionally biased toward acidic residues. Cysteine 247 functions as the Glycyl thioester intermediate in the catalytic mechanism. A handle region region spans residues 251–339 (SVMKTLLDRA…EEEVAIRVDQ (89 aa)).

It belongs to the ATG3 family. Monomer. Interacts with atg8 through an intermediate thioester bond through the C-terminal Gly of atg8. Interacts with the C-terminal region of the E1-like atg7 enzyme. Also interacts with the atg12-atg5 conjugate.

It is found in the cytoplasm. Its function is as follows. E2 conjugating enzyme required for the cytoplasm to vacuole transport (Cvt) and autophagy. Required for selective autophagic degradation of the nucleus (nucleophagy) as well as for mitophagy which contributes to regulate mitochondrial quantity and quality by eliminating the mitochondria to a basal level to fulfill cellular energy requirements and preventing excess ROS production. Responsible for the E2-like covalent binding of phosphatidylethanolamine to the C-terminal Gly of atg8. The atg12-atg5 conjugate plays a role of an E3 and promotes the transfer of atg8 from atg3 to phosphatidylethanolamine (PE). This step is required for the membrane association of atg8. The formation of the atg8-phosphatidylethanolamine conjugate is essential for autophagy and for the cytoplasm to vacuole transport (Cvt). The atg8-PE conjugate mediates tethering between adjacent membranes and stimulates membrane hemifusion, leading to expansion of the autophagosomal membrane during autophagy. Required for normal mycelial growth and conidiogenesis, and regulates sclerotial formation. Plays an essential role in pathogenesis. This Botryotinia fuckeliana (strain BcDW1) (Noble rot fungus) protein is Autophagy-related protein 3.